Here is a 306-residue protein sequence, read N- to C-terminus: Acetylglutamate kinase (306 aa).

Residues 68 to 69 (GG), Arg90, and Asn195 each bind substrate.

The protein belongs to the acetylglutamate kinase family. ArgB subfamily.

It localises to the cytoplasm. The catalysed reaction is N-acetyl-L-glutamate + ATP = N-acetyl-L-glutamyl 5-phosphate + ADP. The protein operates within amino-acid biosynthesis; L-arginine biosynthesis; N(2)-acetyl-L-ornithine from L-glutamate: step 2/4. Functionally, catalyzes the ATP-dependent phosphorylation of N-acetyl-L-glutamate. The protein is Acetylglutamate kinase of Chromohalobacter salexigens (strain ATCC BAA-138 / DSM 3043 / CIP 106854 / NCIMB 13768 / 1H11).